The chain runs to 326 residues: Olfactory receptor 8A1 (326 aa).

Residues 1–45 (MGFLSPMHPCRPPTQRRMAAGNHSTVTEFILKGLTKRADLQLPLF) lie on the Extracellular side of the membrane. An N-linked (GlcNAc...) asparagine glycan is attached at asparagine 22. The chain crosses the membrane as a helical span at residues 46–66 (LLFLGIYLVTIVGNLGMITLI). Over 67-77 (CLNSQLHTPMY) the chain is Cytoplasmic. A helical transmembrane segment spans residues 78 to 100 (YFLSNLSLMDLCYSSVITPKMLV). Residues 101-116 (NFVSEKNIISYAGCMS) are Extracellular-facing. An intrachain disulfide couples cysteine 114 to cysteine 195. Residues 117-137 (QLYFFLVFVIAECYMLTVMAY) traverse the membrane as a helical segment. At 138 to 150 (DRYVAICHPLLYN) the chain is on the cytoplasmic side. Residues 151 to 171 (IIMSHHTCLLLVAVVYAIGLI) form a helical membrane-spanning segment. Over 172-222 (GSTIETGLMLKLPYCEHLISHYFCDILPLMKLSCSSTYDVEMTVFFSAGFN) the chain is Extracellular. Residues 223 to 243 (IIVTSLTVLVSYTFILSSILG) traverse the membrane as a helical segment. Residues 244–260 (ISTTEGRSKAFSTCSSH) are Cytoplasmic-facing. The chain crosses the membrane as a helical span at residues 261-281 (LAAVGMFYGSTAFMYLKPSTI). Residues 282–287 (SSLTQE) lie on the Extracellular side of the membrane. A helical transmembrane segment spans residues 288–308 (NVASVFYTTVIPMLNPLIYSL). The Cytoplasmic segment spans residues 309–326 (RNKEVKAAVQKTLRGKLF).

Belongs to the G-protein coupled receptor 1 family.

The protein localises to the cell membrane. In terms of biological role, odorant receptor. The polypeptide is Olfactory receptor 8A1 (OR8A1) (Homo sapiens (Human)).